The primary structure comprises 181 residues: Large ribosomal subunit protein uL5 (181 aa).

It belongs to the universal ribosomal protein uL5 family. In terms of assembly, part of the 50S ribosomal subunit; contacts the 5S rRNA and probably tRNA. Forms a bridge to the 30S subunit in the 70S ribosome.

In terms of biological role, this is one of the proteins that bind and probably mediate the attachment of the 5S RNA into the large ribosomal subunit, where it forms part of the central protuberance. In the 70S ribosome it contacts protein S13 of the 30S subunit (bridge B1b), connecting the 2 subunits; this bridge is implicated in subunit movement. May contact the P site tRNA; the 5S rRNA and some of its associated proteins might help stabilize positioning of ribosome-bound tRNAs. The polypeptide is Large ribosomal subunit protein uL5 (Methanococcus maripaludis (strain C7 / ATCC BAA-1331)).